The following is a 282-amino-acid chain: UPF0759 protein YunF (282 aa).

This sequence belongs to the UPF0759 family.

The sequence is that of UPF0759 protein YunF (yunF) from Bacillus subtilis (strain 168).